Reading from the N-terminus, the 513-residue chain is Lysine--tRNA ligase (513 aa).

Mg(2+)-binding residues include Glu423 and Glu430.

Belongs to the class-II aminoacyl-tRNA synthetase family. As to quaternary structure, homodimer. It depends on Mg(2+) as a cofactor.

It localises to the cytoplasm. It catalyses the reaction tRNA(Lys) + L-lysine + ATP = L-lysyl-tRNA(Lys) + AMP + diphosphate. This chain is Lysine--tRNA ligase, found in Anaeromyxobacter dehalogenans (strain 2CP-1 / ATCC BAA-258).